A 420-amino-acid polypeptide reads, in one-letter code: Gamma-glutamyl phosphate reductase (420 aa).

It belongs to the gamma-glutamyl phosphate reductase family.

It is found in the cytoplasm. It catalyses the reaction L-glutamate 5-semialdehyde + phosphate + NADP(+) = L-glutamyl 5-phosphate + NADPH + H(+). It participates in amino-acid biosynthesis; L-proline biosynthesis; L-glutamate 5-semialdehyde from L-glutamate: step 2/2. Catalyzes the NADPH-dependent reduction of L-glutamate 5-phosphate into L-glutamate 5-semialdehyde and phosphate. The product spontaneously undergoes cyclization to form 1-pyrroline-5-carboxylate. This is Gamma-glutamyl phosphate reductase from Streptococcus pneumoniae (strain ATCC 700669 / Spain 23F-1).